Consider the following 78-residue polypeptide: Exodeoxyribonuclease 7 small subunit (78 aa).

This sequence belongs to the XseB family. Heterooligomer composed of large and small subunits.

Its subcellular location is the cytoplasm. It carries out the reaction Exonucleolytic cleavage in either 5'- to 3'- or 3'- to 5'-direction to yield nucleoside 5'-phosphates.. In terms of biological role, bidirectionally degrades single-stranded DNA into large acid-insoluble oligonucleotides, which are then degraded further into small acid-soluble oligonucleotides. The polypeptide is Exodeoxyribonuclease 7 small subunit (Mycobacterium leprae (strain TN)).